The following is a 398-amino-acid chain: Elongation factor Tu (398 aa).

A tr-type G domain is found at Lys-10–Glu-208. A G1 region spans residues Gly-19–Thr-26. Gly-19–Thr-26 lines the GTP pocket. Position 26 (Thr-26) interacts with Mg(2+). Residues Gly-61–Ala-65 are G2. The segment at Asp-82–Gly-85 is G3. GTP is bound by residues Asp-82–His-86 and Asn-137–Asp-140. Residues Asn-137–Asp-140 form a G4 region. The tract at residues Ser-175 to Leu-177 is G5.

The protein belongs to the TRAFAC class translation factor GTPase superfamily. Classic translation factor GTPase family. EF-Tu/EF-1A subfamily. Monomer.

It localises to the cytoplasm. It carries out the reaction GTP + H2O = GDP + phosphate + H(+). Its function is as follows. GTP hydrolase that promotes the GTP-dependent binding of aminoacyl-tRNA to the A-site of ribosomes during protein biosynthesis. The polypeptide is Elongation factor Tu (Marinobacter nauticus (strain ATCC 700491 / DSM 11845 / VT8) (Marinobacter aquaeolei)).